The following is a 549-amino-acid chain: Cell death protein 4 (549 aa).

The 91-residue stretch at 1-91 (MLCEIECRAL…HLADFLEDYI (91 aa)) folds into the CARD domain. ATP contacts are provided by Tyr-131, Gly-162, Gly-164, Lys-165, Ser-166, Val-167, Arg-273, Thr-367, and Tyr-369. The 285-residue stretch at 133 to 417 (REYHVDRVIK…KLWSCVIPVD (285 aa)) folds into the NB-ARC domain. Ser-166 is a Mg(2+) binding site.

As to quaternary structure, associates as an asymmetric homodimer with ced-9. Only one ced-4 molecule within the dimer interacts directly with ced-9. Upon release from ced-9, forms a multimer, known as the apoptosome, and interacts with ced-3; the interaction results in ced-3 autoproteolytic cleavage and activation. Multiple oligomeric states of the apoptosome are observed including hexamers, heptamers and octamers. The hexamers likely represent a pre-mature state of the apoptosome and may contribute to the regulation of ced-3 activation. The apoptosome multimer also interacts with two processed ced-3 to form a stable holoenzyme. Interacts with sex-determining protein fem-1. May form a complex composed of ced-3, ced-4 and mac-1 or of ced-9, ced-4 and mac-1. Within the complex, interacts with mac-1.

The protein resides in the mitochondrion. It localises to the cytoplasm. The protein localises to the perinuclear region. Component of the egl-1, ced-9, ced-4 and ced-3 apoptotic signaling cascade required for the initiation of programmed cell death in cells fated to die during embryonic and postembryonic development. During oogenesis, required for germline apoptosis downstream of ced-9 and upstream of ced-3 but independently of egl-1. May regulate germline apoptosis in response to DNA damage, probably downstream of let-60/ras and mpk-1 pathway. Regulates CEP neuron apoptosis in response to high Al(3+) levels. During male tail morphogenesis, promotes apoptosis of the tail-spike cell upstream of ced-3 but independently of egl-1 and ced-9. May play a role in sex-specific cell apoptosis, probably by promoting ced-3-mediated cleavage of sex-determining protein fem-1. During larval development, required for the elimination of transient presynaptic components downstream of egl-1 and ced-9 and upstream of ced-3 apoptotic pathway. Downstream of calreticulin crt-1 and upstream of ced-3 and independently of egl-1 and ced-9, plays a role in the initial steps of axonal regrowth following axotomy. Together with ain-1, a component of the miRNA-induced-silencing complex (miRISC), and probably upstream of ced-3, regulates temporal cell fate patterning during larval development. May play a role in resistance to S.typhimurium-mediated infection. Functionally, plays a major role in programmed cell death. egl-1 binds to and directly inhibits the activity of ced-9, releasing the cell death activator ced-4 from a ced-9/ced-4-containing protein complex and allowing ced-4 to induce caspase ced-3 autoproteolytic cleavage and activation. Also forms a holoenzyme with processed ced-3 enhancing ced-3 activity. In terms of biological role, prevents programmed cell death. This Caenorhabditis elegans protein is Cell death protein 4 (ced-4).